Reading from the N-terminus, the 331-residue chain is Benzylsuccinate synthase activating enzyme (331 aa).

In terms of domain architecture, Radical SAM core spans 15–315; it reads QDGPGIRTTI…VTIGGIVGIA (301 aa). [4Fe-4S] cluster is bound by residues Cys-29, Cys-33, Cys-36, Cys-55, Cys-58, Cys-61, Cys-65, Cys-89, Cys-92, Cys-95, and Cys-99. Residue 35–37 participates in S-adenosyl-L-methionine binding; it reads WCH. 4Fe-4S ferredoxin-type domains are found at residues 46 to 75 and 80 to 109; these read QEFY…LVRN and TIVQ…IVGQ. S-adenosyl-L-methionine contacts are provided by residues Gly-139, 189-191, and His-263; that span reads DLK.

It belongs to the organic radical-activating enzymes family. [4Fe-4S] cluster serves as cofactor.

It catalyses the reaction glycyl-[protein] + reduced [flavodoxin] + S-adenosyl-L-methionine = glycin-2-yl radical-[protein] + semiquinone [flavodoxin] + 5'-deoxyadenosine + L-methionine + H(+). The protein operates within xenobiotic degradation; toluene degradation [regulation]. In terms of biological role, activation of benzylsuccinate synthase under anaerobic conditions by generation of an organic free radical, using S-adenosylmethionine and reduced flavodoxin as cosubstrates to produce 5'-deoxy-adenosine. In Thauera aromatica, this protein is Benzylsuccinate synthase activating enzyme (bssD).